Reading from the N-terminus, the 584-residue chain is Long-chain-fatty-acid--AMP ligase FadD23 (584 aa).

Transmembrane regions (helical) follow at residues 199-219 (YFAD…WLPF) and 225-245 (LVLG…TSPV).

Belongs to the ATP-dependent AMP-binding enzyme family.

It localises to the membrane. It catalyses the reaction holo-[(hydroxy)phthioceranic acid synthase] + hexadecanoate + ATP = hexadecanoyl-[(hydroxy)phthioceranic acid synthase] + AMP + diphosphate. It carries out the reaction holo-[(hydroxy)phthioceranic acid synthase] + octadecanoate + ATP = octadecanoyl-[(hydroxy)phthioceranic acid synthase] + AMP + diphosphate. It functions in the pathway lipid metabolism; fatty acid biosynthesis. Its function is as follows. Catalyzes the activation of long-chain fatty acids as acyl-adenylates (acyl-AMP), which are then transferred to the multifunctional polyketide synthase (PKS) type III for further chain extension. Involved in the biosynthesis of sulfolipid 1 (SL-1). The sequence is that of Long-chain-fatty-acid--AMP ligase FadD23 (fadD23) from Mycobacterium bovis (strain ATCC BAA-935 / AF2122/97).